The following is a 512-amino-acid chain: Sucrose-6-phosphate hydrolase (512 aa).

Residues Trp40 to Asp43, Gln59, Trp67, Phe102 to Ser103, Arg165 to Asp166, Glu229, and Trp311 contribute to the substrate site. Asp43 is an active-site residue.

This sequence belongs to the glycosyl hydrolase 32 family.

It localises to the cytoplasm. The catalysed reaction is Hydrolysis of terminal non-reducing beta-D-fructofuranoside residues in beta-D-fructofuranosides.. The protein operates within glycan biosynthesis; sucrose metabolism. This chain is Sucrose-6-phosphate hydrolase (sacA), found in Zymomonas mobilis subsp. mobilis (strain ATCC 10988 / DSM 424 / LMG 404 / NCIMB 8938 / NRRL B-806 / ZM1).